We begin with the raw amino-acid sequence, 629 residues long: tRNA uridine 5-carboxymethylaminomethyl modification enzyme MnmG (629 aa).

FAD-binding positions include 13–18 (GGGHAG), V125, and S180. NAD(+) is bound at residue 273-287 (GPRYCPSIEDKVMRF). Residue Q370 participates in FAD binding.

This sequence belongs to the MnmG family. In terms of assembly, homodimer. Heterotetramer of two MnmE and two MnmG subunits. Requires FAD as cofactor.

The protein resides in the cytoplasm. NAD-binding protein involved in the addition of a carboxymethylaminomethyl (cmnm) group at the wobble position (U34) of certain tRNAs, forming tRNA-cmnm(5)s(2)U34. This is tRNA uridine 5-carboxymethylaminomethyl modification enzyme MnmG from Aliivibrio fischeri (strain ATCC 700601 / ES114) (Vibrio fischeri).